We begin with the raw amino-acid sequence, 577 residues long: Sulfite reductase [NADPH] hemoprotein beta-component (577 aa).

Cysteine 436, cysteine 442, cysteine 481, and cysteine 485 together coordinate [4Fe-4S] cluster. Cysteine 485 contributes to the siroheme binding site.

Belongs to the nitrite and sulfite reductase 4Fe-4S domain family. Alpha(8)-beta(8). The alpha component is a flavoprotein, the beta component is a hemoprotein. Siroheme is required as a cofactor. It depends on [4Fe-4S] cluster as a cofactor.

It carries out the reaction hydrogen sulfide + 3 NADP(+) + 3 H2O = sulfite + 3 NADPH + 4 H(+). It participates in sulfur metabolism; hydrogen sulfide biosynthesis; hydrogen sulfide from sulfite (NADPH route): step 1/1. In terms of biological role, component of the sulfite reductase complex that catalyzes the 6-electron reduction of sulfite to sulfide. This is one of several activities required for the biosynthesis of L-cysteine from sulfate. The protein is Sulfite reductase [NADPH] hemoprotein beta-component of Shewanella woodyi (strain ATCC 51908 / MS32).